The primary structure comprises 370 residues: uncharacterized protein (370 aa).

A divalent metal cation-binding residues include Asp152, His154, Asp184, Asn215, His306, and His308.

It belongs to the metallophosphoesterase superfamily. Requires a divalent metal cation as cofactor.

This is an uncharacterized protein from Helicobacter pylori (strain ATCC 700392 / 26695) (Campylobacter pylori).